Here is a 386-residue protein sequence, read N- to C-terminus: Succinate--CoA ligase [ADP-forming] subunit beta (386 aa).

An ATP-grasp domain is found at 9 to 244 (KEVLRKYGVA…LDEEDPKEIE (236 aa)). ATP contacts are provided by residues Lys-46, 53–55 (GRG), Glu-99, Cys-102, and Glu-107. The Mg(2+) site is built by Asn-199 and Asp-213. Substrate is bound by residues Asn-264 and 321–323 (GIM).

This sequence belongs to the succinate/malate CoA ligase beta subunit family. In terms of assembly, heterotetramer of two alpha and two beta subunits. The cofactor is Mg(2+).

It carries out the reaction succinate + ATP + CoA = succinyl-CoA + ADP + phosphate. The catalysed reaction is GTP + succinate + CoA = succinyl-CoA + GDP + phosphate. It functions in the pathway carbohydrate metabolism; tricarboxylic acid cycle; succinate from succinyl-CoA (ligase route): step 1/1. Succinyl-CoA synthetase functions in the citric acid cycle (TCA), coupling the hydrolysis of succinyl-CoA to the synthesis of either ATP or GTP and thus represents the only step of substrate-level phosphorylation in the TCA. The beta subunit provides nucleotide specificity of the enzyme and binds the substrate succinate, while the binding sites for coenzyme A and phosphate are found in the alpha subunit. The protein is Succinate--CoA ligase [ADP-forming] subunit beta of Bacillus licheniformis (strain ATCC 14580 / DSM 13 / JCM 2505 / CCUG 7422 / NBRC 12200 / NCIMB 9375 / NCTC 10341 / NRRL NRS-1264 / Gibson 46).